The sequence spans 355 residues: UDP-N-acetylglucosamine--N-acetylmuramyl-(pentapeptide) pyrophosphoryl-undecaprenol N-acetylglucosamine transferase (355 aa).

Residues 14-16, Asn-126, Arg-162, Ser-190, Ile-243, 262-267, and Gln-287 contribute to the UDP-N-acetyl-alpha-D-glucosamine site; these read TGG and ALTVSE.

It belongs to the glycosyltransferase 28 family. MurG subfamily.

The protein localises to the cell inner membrane. The catalysed reaction is di-trans,octa-cis-undecaprenyl diphospho-N-acetyl-alpha-D-muramoyl-L-alanyl-D-glutamyl-meso-2,6-diaminopimeloyl-D-alanyl-D-alanine + UDP-N-acetyl-alpha-D-glucosamine = di-trans,octa-cis-undecaprenyl diphospho-[N-acetyl-alpha-D-glucosaminyl-(1-&gt;4)]-N-acetyl-alpha-D-muramoyl-L-alanyl-D-glutamyl-meso-2,6-diaminopimeloyl-D-alanyl-D-alanine + UDP + H(+). The protein operates within cell wall biogenesis; peptidoglycan biosynthesis. Its function is as follows. Cell wall formation. Catalyzes the transfer of a GlcNAc subunit on undecaprenyl-pyrophosphoryl-MurNAc-pentapeptide (lipid intermediate I) to form undecaprenyl-pyrophosphoryl-MurNAc-(pentapeptide)GlcNAc (lipid intermediate II). The sequence is that of UDP-N-acetylglucosamine--N-acetylmuramyl-(pentapeptide) pyrophosphoryl-undecaprenol N-acetylglucosamine transferase from Vibrio vulnificus (strain YJ016).